The sequence spans 260 residues: MLIIPAIDIKDGKCVRLTRGEFDKKKIYLDNPRDMAIIWRKQNAKMIHIVDLDAALTGKLVNFEKIREIVTDLDIPVQVGGGLRSVDAVEKYLDIGVSRVVIGSAAVTNPGLVEDLLKRYSPSQIVVGIDAENGIPKIKGWTESSGMQDYELALQMKKLGVKRIIYTDIACDGMMQGVGFESTKRFVEKAGMRVTASGGVTGSEDLRKLQTLEKYGVDSVIIGKALYENNFSCQKLWYNFEKCIGIDCDFSTALKKECCS.

Asp8 functions as the Proton acceptor in the catalytic mechanism. The active-site Proton donor is the Asp130.

The protein belongs to the HisA/HisF family.

The protein localises to the cytoplasm. The enzyme catalyses 1-(5-phospho-beta-D-ribosyl)-5-[(5-phospho-beta-D-ribosylamino)methylideneamino]imidazole-4-carboxamide = 5-[(5-phospho-1-deoxy-D-ribulos-1-ylimino)methylamino]-1-(5-phospho-beta-D-ribosyl)imidazole-4-carboxamide. It functions in the pathway amino-acid biosynthesis; L-histidine biosynthesis; L-histidine from 5-phospho-alpha-D-ribose 1-diphosphate: step 4/9. The chain is 1-(5-phosphoribosyl)-5-[(5-phosphoribosylamino)methylideneamino] imidazole-4-carboxamide isomerase from Chlorobium phaeobacteroides (strain BS1).